The sequence spans 849 residues: Rho guanine nucleotide exchange factor 15 (849 aa).

Disordered stretches follow at residues 1 to 146, 159 to 202, and 277 to 308; these read MSAQ…ASAP, GAEG…NGTP, and LPPL…LPSE. Positions 18-31 are enriched in basic residues; that stretch reads RIIRPRPPSRHRAP. Residues 48 to 59 are compositionally biased toward polar residues; sequence QISNDASASVCT. Low complexity predominate over residues 65 to 110; that stretch reads PPTASLKPPALLPPSVSRTSLDSQTSPDSPSSTPSPSPVSRRSISP. Serine 107 and serine 109 each carry phosphoserine. The span at 111–123 shows a compositional bias: pro residues; sequence EPAPCSPVPPPKP. Over residues 164–180 the composition is skewed to polar residues; that stretch reads AQSSDSLERCSQGSTEV. Position 361 is a phosphotyrosine; by EPHB2 (tyrosine 361). The DH domain occupies 425–609; it reads RMQESLFEVV…SKIIERCSAE (185 aa). Composition is skewed to polar residues over residues 771-786 and 840-849; these read CSEP…QSLE and SSGTPDTPQP. 2 disordered regions span residues 771–803 and 819–849; these read CSEP…GWLK and GEHE…TPQP.

As to quaternary structure, interacts with EPHA4. Interacts with EPHB2. Post-translationally, phosphorylated on tyrosine residues upon EFNA1 stimulation. EPHB2-dependent phosphorylation at Tyr-361 triggers UBE3A-mediated ubiquitination. Ubiquitinated; UBE3A-mediated ubiquitination and degradation by the proteasome promotes EFNB1-dependent synapse formation. In terms of tissue distribution, at P12, expressed is detected in the CA1 region and the dentate gyrus of the hippocampus.

The protein resides in the cell projection. Its subcellular location is the dendrite. In terms of biological role, specific GEF for RhoA activation. Does not activate RAC1 or CDC42. Regulates vascular smooth muscle contractility. Negatively regulates excitatory synapse development by suppressing the synapse-promoting activity of EPHB2. This is Rho guanine nucleotide exchange factor 15 (Arhgef15) from Mus musculus (Mouse).